The following is a 145-amino-acid chain: 3-dehydroquinate dehydratase (145 aa).

Catalysis depends on Y24, which acts as the Proton acceptor. N75, H81, and D88 together coordinate substrate. H101 (proton donor) is an active-site residue. Residues 102 to 103 (IS) and R112 contribute to the substrate site.

This sequence belongs to the type-II 3-dehydroquinase family. In terms of assembly, homododecamer.

The enzyme catalyses 3-dehydroquinate = 3-dehydroshikimate + H2O. The protein operates within metabolic intermediate biosynthesis; chorismate biosynthesis; chorismate from D-erythrose 4-phosphate and phosphoenolpyruvate: step 3/7. In terms of biological role, catalyzes a trans-dehydration via an enolate intermediate. This Rhizobium etli (strain CIAT 652) protein is 3-dehydroquinate dehydratase.